A 237-amino-acid polypeptide reads, in one-letter code: ATP synthase subunit a (237 aa).

Transmembrane regions (helical) follow at residues 17–37, 75–95, 112–132, 179–201, and 214–234; these read LSDM…AVAA, FLTL…LGLP, DATV…YYGV, ILLG…GAAI, and GTIQ…HKVS.

It belongs to the ATPase A chain family. In terms of assembly, F-type ATPases have 2 components, CF(1) - the catalytic core - and CF(0) - the membrane proton channel. CF(1) has five subunits: alpha(3), beta(3), gamma(1), delta(1), epsilon(1). CF(0) has three main subunits: a(1), b(2) and c(9-12). The alpha and beta chains form an alternating ring which encloses part of the gamma chain. CF(1) is attached to CF(0) by a central stalk formed by the gamma and epsilon chains, while a peripheral stalk is formed by the delta and b chains.

Its subcellular location is the cell membrane. Functionally, key component of the proton channel; it plays a direct role in the translocation of protons across the membrane. The chain is ATP synthase subunit a from Geobacillus kaustophilus (strain HTA426).